The following is a 368-amino-acid chain: Phospho-N-acetylmuramoyl-pentapeptide-transferase (368 aa).

9 helical membrane passes run 30 to 50 (AAAITALLISLMAGPWFIRYL), 72 to 92 (LPTMGGILIIFSIEVSVFLWA), 98 to 118 (HVWLVMLAIFWMGLIGFIDDY), 139 to 159 (ISLGLVIGLYTWFDPAFAVLL), 170 to 190 (LSIDYGIFYIPIVIFIITAVS), 201 to 221 (GLASGTTAIVVSALGAFSYLA), 238 to 258 (GGEIAVVCMAIVMACVGFLWF), 264 to 286 (EIIMGDTGSLALGSAVAVIALLI), and 345 to 365 (KIVIRFWIISILFFLTSLMTL).

The protein belongs to the glycosyltransferase 4 family. MraY subfamily. The cofactor is Mg(2+).

It localises to the cell inner membrane. The catalysed reaction is UDP-N-acetyl-alpha-D-muramoyl-L-alanyl-gamma-D-glutamyl-meso-2,6-diaminopimeloyl-D-alanyl-D-alanine + di-trans,octa-cis-undecaprenyl phosphate = di-trans,octa-cis-undecaprenyl diphospho-N-acetyl-alpha-D-muramoyl-L-alanyl-D-glutamyl-meso-2,6-diaminopimeloyl-D-alanyl-D-alanine + UMP. Its pathway is cell wall biogenesis; peptidoglycan biosynthesis. Its function is as follows. Catalyzes the initial step of the lipid cycle reactions in the biosynthesis of the cell wall peptidoglycan: transfers peptidoglycan precursor phospho-MurNAc-pentapeptide from UDP-MurNAc-pentapeptide onto the lipid carrier undecaprenyl phosphate, yielding undecaprenyl-pyrophosphoryl-MurNAc-pentapeptide, known as lipid I. In Chlorobium phaeobacteroides (strain DSM 266 / SMG 266 / 2430), this protein is Phospho-N-acetylmuramoyl-pentapeptide-transferase.